The sequence spans 357 residues: MYDQLQSIEDRYEELGELLSDPAVISDTKRFMELSKEEANTRETVEVYRRYKQVVEGISDAEELLSENLDAEMAEMAKEELSDLKKEKEVLEDRIKILLLPKDPNDDKNIIMEIRGAAGGDEAALFAGDLFNMYQKYAEAQGWKAEVLEANVTGIGGYKEVIMMISGDNVFSKLKYESGAHRVQRVPSTESQGRIHTSTATVVVMPEAEEVEIELADKDIRVDIYHASGAGGQHVNKTASAVRLTHLPTGIVVAMQDERSQLKNREKAMKVLRARVYDQIQQEAQSEYDANRKSAVGTGDRSERIRTYNFPQNRVTDHRIGLTIQKLDQILAGKLDEIIDALVLYDQTSKLEEMQNG.

Glutamine 233 bears the N5-methylglutamine mark.

The protein belongs to the prokaryotic/mitochondrial release factor family. Post-translationally, methylated by PrmC. Methylation increases the termination efficiency of RF1.

It is found in the cytoplasm. Functionally, peptide chain release factor 1 directs the termination of translation in response to the peptide chain termination codons UAG and UAA. The sequence is that of Peptide chain release factor 1 from Enterococcus faecalis (strain ATCC 700802 / V583).